The chain runs to 297 residues: Inactive beta selinene synthase (297 aa).

It belongs to the terpene synthase family. In terms of assembly, monomer.

It is found in the cytoplasm. In terms of biological role, inactive selinene synthase. This chain is Inactive beta selinene synthase, found in Zea mays (Maize).